Consider the following 142-residue polypeptide: ATP synthase epsilon chain (142 aa).

The protein belongs to the ATPase epsilon chain family. As to quaternary structure, F-type ATPases have 2 components, CF(1) - the catalytic core - and CF(0) - the membrane proton channel. CF(1) has five subunits: alpha(3), beta(3), gamma(1), delta(1), epsilon(1). CF(0) has three main subunits: a, b and c.

It is found in the cell inner membrane. Produces ATP from ADP in the presence of a proton gradient across the membrane. This chain is ATP synthase epsilon chain, found in Coxiella burnetii (strain CbuK_Q154) (Coxiella burnetii (strain Q154)).